A 456-amino-acid polypeptide reads, in one-letter code: NADPH-ferredoxin reductase FprA (456 aa).

Residues Ser-17, Glu-43, Leu-51, and Val-87 each coordinate FAD. Residues Arg-113, 158-161 (NGNV), 202-203 (RR), and Glu-214 each bind NADP(+). FAD contacts are provided by residues Trp-362 and 369 to 371 (GVI). Residue Gly-369 coordinates NADP(+).

It belongs to the ferredoxin--NADP reductase type 1 family. In terms of assembly, monomer. FAD serves as cofactor.

It catalyses the reaction 2 reduced [2Fe-2S]-[ferredoxin] + NADP(+) + H(+) = 2 oxidized [2Fe-2S]-[ferredoxin] + NADPH. In terms of biological role, may serve as electron transfer protein and supply electrons to P450 systems. The polypeptide is NADPH-ferredoxin reductase FprA (fprA) (Mycobacterium leprae (strain TN)).